The primary structure comprises 1047 residues: uncharacterized protein (1047 aa).

At K17 the chain carries N6-acetyllysine. 2 disordered regions span residues 172–208 and 236–283; these read PPCSLAPAPSKGQTLDGTFLRGVPAEGSSKDSSGSFS and RNSK…PQAL. S208 is subject to Phosphoserine. Polar residues predominate over residues 237–254; the sequence is NSKQAMSEGPSSPWTQLA. Pro residues predominate over residues 268-283; sequence HYPPPHHPPPHPPQAL. 2 positions are modified to phosphoserine: S299 and S391. A Phosphothreonine modification is found at T397. 7 disordered regions span residues 448 to 469, 482 to 504, 519 to 567, 668 to 690, 714 to 763, 931 to 1004, and 1021 to 1047; these read EKLQPRLSEHSGPPIVIRDSPV, ECQSLPQKEGARPPSSPPMPVID, PAPE…LRGS, PSTPTSAPAPTQPAPTPTSGPIG, VAVA…GDSL, EAGA…TLKA, and PTWGHKSSRPDQPSPCPQLLDSQSHHL. Residues S455, S496, and S497 each carry the phosphoserine modification. Composition is skewed to low complexity over residues 729 to 741 and 751 to 762; these read PARAQAPASARDP and PAPASTSAPGDS. S936, S956, S988, and S996 each carry phosphoserine. Low complexity predominate over residues 978–996; that stretch reads AAAGEESCGASPTPATSAS.

This is an uncharacterized protein from Homo sapiens (Human).